Reading from the N-terminus, the 372-residue chain is tRNA-specific 2-thiouridylase MnmA (372 aa).

ATP is bound by residues Gly-13 to Ser-20 and Met-39. Residues Asn-99–Asp-101 are interaction with target base in tRNA. Cys-104 acts as the Nucleophile in catalysis. The cysteines at positions 104 and 200 are disulfide-linked. Gly-128 contributes to the ATP binding site. Residues Lys-150 to Gln-152 are interaction with tRNA. The active-site Cysteine persulfide intermediate is Cys-200. An interaction with tRNA region spans residues Arg-310–Tyr-311.

Belongs to the MnmA/TRMU family.

Its subcellular location is the cytoplasm. The enzyme catalyses S-sulfanyl-L-cysteinyl-[protein] + uridine(34) in tRNA + AH2 + ATP = 2-thiouridine(34) in tRNA + L-cysteinyl-[protein] + A + AMP + diphosphate + H(+). Its function is as follows. Catalyzes the 2-thiolation of uridine at the wobble position (U34) of tRNA, leading to the formation of s(2)U34. This is tRNA-specific 2-thiouridylase MnmA from Bacillus pumilus (strain SAFR-032).